The primary structure comprises 378 residues: Anhydro-N-acetylmuramic acid kinase (378 aa).

ATP is bound at residue Gly23 to Asp30.

Belongs to the anhydro-N-acetylmuramic acid kinase family.

It carries out the reaction 1,6-anhydro-N-acetyl-beta-muramate + ATP + H2O = N-acetyl-D-muramate 6-phosphate + ADP + H(+). It functions in the pathway amino-sugar metabolism; 1,6-anhydro-N-acetylmuramate degradation. Its pathway is cell wall biogenesis; peptidoglycan recycling. Catalyzes the specific phosphorylation of 1,6-anhydro-N-acetylmuramic acid (anhMurNAc) with the simultaneous cleavage of the 1,6-anhydro ring, generating MurNAc-6-P. Is required for the utilization of anhMurNAc either imported from the medium or derived from its own cell wall murein, and thus plays a role in cell wall recycling. This is Anhydro-N-acetylmuramic acid kinase from Bordetella pertussis (strain Tohama I / ATCC BAA-589 / NCTC 13251).